Reading from the N-terminus, the 102-residue chain is UV-induced protein uvi31 (102 aa).

This sequence belongs to the BolA/IbaG family.

The protein resides in the mitochondrion matrix. It localises to the cytoplasm. It is found in the nucleus. In terms of biological role, acts as a mitochondrial iron-sulfur (Fe-S) cluster assembly factor that facilitates [4Fe-4S] cluster insertion into a subset of mitochondrial proteins such as lipoyl synthase (LS) and succinate dehydrogenase (SDH). Required during the last step of iron-sulfur protein assembly when the iron-sulfur cluster is inserted into the target protein. Probably acts together with the monothiol glutaredoxin grx5. Not required for [2Fe-2S] cluster insertion into mitochondrial proteins. May be involved in control of cell division, especially during the resumption from cell cycle arrest. In Schizosaccharomyces pombe (strain 972 / ATCC 24843) (Fission yeast), this protein is UV-induced protein uvi31.